A 389-amino-acid chain; its full sequence is Protein WALLS ARE THIN 1 (389 aa).

Transmembrane regions (helical) follow at residues 18–38 (LQLH…HVVS), 49–69 (LVFP…FAYF), 76–96 (PAIT…GITA), 111–131 (TFAS…AALL), 143–163 (GISK…ITLY), 198–218 (WTLG…WLVF), 230–250 (LSVT…IAAF), 266–286 (LFTI…VQIW), 294–314 (VFVA…ASIA), and 319–339 (FYLG…FVLY). EamA domains lie at 32–161 (AGFH…SVIT) and 210–339 (LSWS…FVLY). The residue at position 372 (Ser372) is a Phosphoserine.

This sequence belongs to the drug/metabolite transporter (DMT) superfamily. Plant drug/metabolite exporter (P-DME) (TC 2.A.7.4) family. In terms of tissue distribution, mostly expressed in stems and hypocotyls, also present in seedlings, root, leaves, flowers and siliques. Ubiquitous, mostly expressed in vascular tissues and secondary wall-forming cells, including developing xylem vessels and fibers.

Its subcellular location is the vacuole membrane. In terms of biological role, required for secondary wall formation in fibers, especially in short days conditions. Promotes indole metabolism and transport (e.g. tryptophan, neoglucobrassicin and auxin (indole-3-acetic acid)). May prevent salicylic-acid (SA) accumulation. The chain is Protein WALLS ARE THIN 1 (WAT1) from Arabidopsis thaliana (Mouse-ear cress).